The sequence spans 182 residues: Small ribosomal subunit protein uS4c (182 aa).

The 62-residue stretch at 82–143 folds into the S4 RNA-binding domain; it reads MRLDNILFRL…KQRSKALIQN (62 aa).

This sequence belongs to the universal ribosomal protein uS4 family. As to quaternary structure, part of the 30S ribosomal subunit. Contacts protein S5. The interaction surface between S4 and S5 is involved in control of translational fidelity.

The protein localises to the plastid. Its subcellular location is the chloroplast. One of the primary rRNA binding proteins, it binds directly to 16S rRNA where it nucleates assembly of the body of the 30S subunit. In terms of biological role, with S5 and S12 plays an important role in translational accuracy. The sequence is that of Small ribosomal subunit protein uS4c (rps4) from Isophysis tasmanica.